The sequence spans 76 residues: U-scoloptoxin(13)-Sm1a (76 aa).

Positions 1 to 22 are cleaved as a signal peptide; the sequence is MAYICAXTLAFLLCVNTGIIQA.

Belongs to the scoloptoxin-13 family. Contains 4 disulfide bonds. As to expression, expressed by the venom gland.

The protein resides in the secreted. This Scolopendra morsitans (Tanzanian blue ringleg centipede) protein is U-scoloptoxin(13)-Sm1a.